We begin with the raw amino-acid sequence, 417 residues long: Tryptophan decarboxylase (417 aa).

Position 263 is an N6-(pyridoxal phosphate)lysine (Lys-263).

It belongs to the group II decarboxylase family. The cofactor is pyridoxal 5'-phosphate.

It is found in the cytoplasm. The enzyme catalyses L-tryptophan + H(+) = tryptamine + CO2. Inhibited by (S)-alpha-fluoromethyltryptophan. Functionally, catalyzes the decarboxylation of tryptophan to tryptamine. Tryptamine is a neurotransmitter that induces the release of serotonin, which is suggested to modulate gastrointestinal motility. Therefore, the tryptophan decarboxylase from the gut bacteria Clostridium sporogenes (strain ATCC 15579) may influence host brain and behavior. Has weak activity with tyrosine. Activity against phenylalanine is undetectable. The sequence is that of Tryptophan decarboxylase from Clostridium sporogenes (strain ATCC 15579).